The sequence spans 358 residues: Sesquiterpene synthase Agr3 (358 aa).

Residues Asp-99, Asn-246, Ser-250, and Glu-254 each contribute to the Mg(2+) site. The DDXXD motif motif lies at 99–103 (DNISD). (2E,6E)-farnesyl diphosphate contacts are provided by Arg-334 and Tyr-335.

This sequence belongs to the terpene synthase family. Mg(2+) serves as cofactor.

It carries out the reaction (2E,6E)-farnesyl diphosphate = alpha-muurolene + diphosphate. The catalysed reaction is (2E,6E)-farnesyl diphosphate = gamma-muurolene + diphosphate. The enzyme catalyses (2E,6E)-farnesyl diphosphate = delta-cadinene + diphosphate. Terpene cyclase that catalyzes the cyclization of farnesyl diphosphate (FPP) to various sesquiterpenes, including alpha-muurolene, gamma-muurolene, germacrene, delta-cadinene, delta-cadinol and cubenol. The chain is Sesquiterpene synthase Agr3 from Cyclocybe aegerita (Black poplar mushroom).